The sequence spans 115 residues: Thiosulfate:glutathione sulfurtransferase (115 aa).

In terms of domain architecture, Rhodanese spans 17-115 (ASGRARLFDV…AYREWLEKES (99 aa)). C79 serves as the catalytic Cysteine persulfide intermediate.

In terms of tissue distribution, highly expressed in kidney, liver and skeletal muscle. Lower levels of expression in heart, colon, thymus, spleen, placenta and lung. Weakly expressed in brain, small intestine and peripheral blood leukocytes. Expressed at high levels in the breast carcinoma cell lines MCF-7 and MDA-MB-468 and at a lower level in the breast carcinoma cell line MDA-MB-231, the colon carcinoma call line LoVo and the lung carcinoma cell line A-549. No expression in the cell lines EFO-27 and HeLa, or the normal breast tissue cell lines MCF-10A and H184A1. Detected in invasive ductal carcinoma, but not in the adjacent tissues.

Its subcellular location is the cytoplasm. The protein localises to the perinuclear region. The enzyme catalyses thiosulfate + glutathione = S-sulfanylglutathione + sulfite + H(+). The catalysed reaction is thiosulfate + 2 glutathione = glutathione disulfide + hydrogen sulfide + sulfite + 2 H(+). With respect to regulation, GSS(-) is a potent inhibitor of TSTD1, since the presence of the sulfur dioxygenase (SDO) strongly increases the TSTD1 catalytic activity. Thiosulfate:glutathione sulfurtransferase (TST) required to produce S-sulfanylglutathione (GSS(-)), a central intermediate in hydrogen sulfide metabolism. Provides the link between the first step in mammalian H(2)S metabolism performed by the sulfide:quinone oxidoreductase (SQOR) which catalyzes the conversion of H(2)S to thiosulfate, and the sulfur dioxygenase (SDO) which uses GSS(-) as substrate. The thermodynamic coupling of the irreversible SDO and reversible TST reactions provides a model for the physiologically relevant reaction with thiosulfate as the sulfane donor. GSS(-) spontaneously reacts with glutathione to form glutathione disulfide. This is Thiosulfate:glutathione sulfurtransferase (TSTD1) from Homo sapiens (Human).